Reading from the N-terminus, the 145-residue chain is Hemoglobin subunit beta (145 aa).

Residues 1–145 (MLTAEEKAAV…VANALAHRYH (145 aa)) enclose the Globin domain. T11 is subject to Phosphothreonine. K58 is modified (N6-acetyllysine). Position 62 (H62) interacts with heme b. Residue K81 is modified to N6-acetyllysine. H91 contributes to the heme b binding site. Position 92 is an S-nitrosocysteine (C92).

The protein belongs to the globin family. As to quaternary structure, heterotetramer of two alpha chains and two beta chains. As to expression, red blood cells.

In terms of biological role, involved in oxygen transport from the lung to the various peripheral tissues. This chain is Hemoglobin subunit beta (HBB), found in Alces alces alces (European moose).